The chain runs to 1377 residues: Clustered mitochondria protein homolog (1377 aa).

The tract at residues Met1–Glu61 is disordered. The region spanning Arg353–Leu595 is the Clu domain. The stretch at Val519–Ser552 is one TPR 1 repeat. Disordered stretches follow at residues Asn651–Val700 and Asp886–Phe917. Basic and acidic residues predominate over residues Gln655–Pro690. Positions Asp886 to Lys896 are enriched in polar residues. TPR repeat units follow at residues Ala1022–Val1055, Ala1148–Tyr1181, and Gly1183–Thr1216. The segment at Lys1310 to Ser1377 is disordered. The span at Ala1364–Ser1377 shows a compositional bias: low complexity.

The protein belongs to the CLU family.

The protein localises to the cytoplasm. Functionally, mRNA-binding protein involved in proper cytoplasmic distribution of mitochondria. The polypeptide is Clustered mitochondria protein homolog (Culex quinquefasciatus (Southern house mosquito)).